The following is a 254-amino-acid chain: Guanylate kinase (254 aa).

Residues 64–243 (KHLVVLAGPT…AAREVVDLMM (180 aa)) form the Guanylate kinase-like domain. 71–78 (GPTAVGKG) lines the ATP pocket.

This sequence belongs to the guanylate kinase family.

Its subcellular location is the cytoplasm. It catalyses the reaction GMP + ATP = GDP + ADP. In terms of biological role, essential for recycling GMP and indirectly, cGMP. The sequence is that of Guanylate kinase from Leifsonia xyli subsp. xyli (strain CTCB07).